The chain runs to 69 residues: QTWPPVEGRPSCKRCGACTRMWPPEANRCVCDDIVPQCHEGCSKCEKVDTRSGKPLYQCQSFEYYNCAA.

Disulfide bonds link C12–C31, C18–C29, C38–C45, and C42–C59.

Belongs to the Bowman-Birk serine protease inhibitor family. Expressed in bulb (at protein level).

In terms of biological role, serine protease inhibitor. This is Bowman-Birk type proteinase inhibitor A2 from Hyacinthus orientalis (Common hyacinth).